Here is a 1454-residue protein sequence, read N- to C-terminus: Alpha-2-macroglobulin-like protein 1 (1454 aa).

An N-terminal signal peptide occupies residues 1–17; that stretch reads MWAQLLLGMLALSPAIA. C40 and C78 are joined by a disulfide. An N-linked (GlcNAc...) asparagine glycan is attached at N120. Cystine bridges form between C241–C291 and C259–C279. Residues N281 and N409 are each glycosylated (N-linked (GlcNAc...) asparagine). 7 cysteine pairs are disulfide-bonded: C464/C557, C589/C769, C819/C847, C845/C881, C919/C1307, C1075/C1123, and C1338/C1453. A bait region region spans residues 695 to 726; sequence SHRSPEYSTAMGAGGGHPEAFESSTPLHQAED. Residue N857 is glycosylated (N-linked (GlcNAc...) asparagine). Residues 970-973 constitute a cross-link (isoglutamyl cysteine thioester (Cys-Gln)); that stretch reads CGEQ. N1020 is a glycosylation site (N-linked (GlcNAc...) asparagine).

It belongs to the protease inhibitor I39 (alpha-2-macroglobulin) family. Monomer. In the epidermis, expressed predominantly in the granular layer at the apical edge of keratinocytes (at protein level). Also detected in placenta, testis and thymus but not in epithelia of kidney, lung, small intestine or colon.

The protein localises to the secreted. Its function is as follows. Is able to inhibit all four classes of proteinases by a unique 'trapping' mechanism. This protein has a peptide stretch, called the 'bait region' which contains specific cleavage sites for different proteinases. When a proteinase cleaves the bait region, a conformational change is induced in the protein which traps the proteinase. The entrapped enzyme remains active against low molecular weight substrates (activity against high molecular weight substrates is greatly reduced). Following cleavage in the bait region a thioester bond is hydrolyzed and mediates the covalent binding of the protein to the proteinase. Displays inhibitory activity against chymotrypsin, papain, thermolysin, subtilisin A and, to a lesser extent, elastase but not trypsin. May play an important role during desquamation by inhibiting extracellular proteases. The chain is Alpha-2-macroglobulin-like protein 1 from Homo sapiens (Human).